We begin with the raw amino-acid sequence, 328 residues long: Tyrosine recombinase XerC (328 aa).

The Core-binding (CB) domain maps to 13 to 100; that stretch reads QAPHPQIAAY…AWRGWFKWMA (88 aa). Positions 122–319 constitute a Tyr recombinase domain; it reads RLPKALSVEQ…DFQHLAKIYD (198 aa). Active-site residues include Arg-162, Lys-197, His-271, Arg-274, and His-297. Residue Tyr-306 is the O-(3'-phospho-DNA)-tyrosine intermediate of the active site.

It belongs to the 'phage' integrase family. XerC subfamily. Forms a cyclic heterotetrameric complex composed of two molecules of XerC and two molecules of XerD.

It localises to the cytoplasm. Its function is as follows. Site-specific tyrosine recombinase, which acts by catalyzing the cutting and rejoining of the recombining DNA molecules. The XerC-XerD complex is essential to convert dimers of the bacterial chromosome into monomers to permit their segregation at cell division. It also contributes to the segregational stability of plasmids. The chain is Tyrosine recombinase XerC from Ralstonia pickettii (strain 12J).